The sequence spans 305 residues: UDP-N-acetylenolpyruvoylglucosamine reductase (305 aa).

An FAD-binding PCMH-type domain is found at 35-214; sequence VGGPAQALFT…RARMNEVQAH (180 aa). Arg179 is a catalytic residue. Catalysis depends on Ser228, which acts as the Proton donor. The active site involves Glu298.

The protein belongs to the MurB family. FAD is required as a cofactor.

The protein resides in the cytoplasm. The catalysed reaction is UDP-N-acetyl-alpha-D-muramate + NADP(+) = UDP-N-acetyl-3-O-(1-carboxyvinyl)-alpha-D-glucosamine + NADPH + H(+). Its pathway is cell wall biogenesis; peptidoglycan biosynthesis. In terms of biological role, cell wall formation. This is UDP-N-acetylenolpyruvoylglucosamine reductase from Nitrobacter winogradskyi (strain ATCC 25391 / DSM 10237 / CIP 104748 / NCIMB 11846 / Nb-255).